A 417-amino-acid polypeptide reads, in one-letter code: Tyrosine--tRNA ligase (417 aa).

Position 35 (Y35) interacts with L-tyrosine. Positions 40–49 match the 'HIGH' region motif; sequence ATAGSLTVGH. 2 residues coordinate L-tyrosine: Y165 and Q169. Positions 229-233 match the 'KMSKS' region motif; that stretch reads KFGKS. ATP is bound at residue K232. The S4 RNA-binding domain occupies 350 to 416; the sequence is ISLLEALVFT…GKRFNALIIF (67 aa).

It belongs to the class-I aminoacyl-tRNA synthetase family. TyrS type 1 subfamily. Homodimer.

The protein resides in the cytoplasm. It carries out the reaction tRNA(Tyr) + L-tyrosine + ATP = L-tyrosyl-tRNA(Tyr) + AMP + diphosphate + H(+). Its function is as follows. Catalyzes the attachment of tyrosine to tRNA(Tyr) in a two-step reaction: tyrosine is first activated by ATP to form Tyr-AMP and then transferred to the acceptor end of tRNA(Tyr). The polypeptide is Tyrosine--tRNA ligase (Phytoplasma mali (strain AT)).